We begin with the raw amino-acid sequence, 152 residues long: UPF0266 membrane protein YobD (152 aa).

The next 3 membrane-spanning stretches (helical) occupy residues 6-26, 45-65, and 67-87; these read LVLI…QFIM, IDSV…VTNH, and ALIT…IFWI.

The protein belongs to the UPF0266 family.

Its subcellular location is the cell inner membrane. This chain is UPF0266 membrane protein YobD, found in Shigella dysenteriae serotype 1 (strain Sd197).